Consider the following 29-residue polypeptide: GEYCGESCYLIPCFTPGCYCVSRQCVNKN.

The cyclopeptide (Gly-Asn) cross-link spans 1-29; the sequence is GEYCGESCYLIPCFTPGCYCVSRQCVNKN. 3 cysteine pairs are disulfide-bonded: Cys4-Cys18, Cys8-Cys20, and Cys13-Cys25.

This is a cyclic peptide.

Functionally, probably participates in a plant defense mechanism. Has no activity against bacteria up to a concentration of 80 uM. Has cytotoxic but no hemolytic activity. The protein is Chassatide C10 of Chassalia chartacea (Chassalia curviflora).